Reading from the N-terminus, the 128-residue chain is Nucleoside diphosphate kinase B (128 aa).

An N-acetylmethionine modification is found at Met1. The ATP site is built by Lys9, Phe39, Thr70, Arg81, and Asn91. Residue His94 is the Pros-phosphohistidine intermediate of the active site.

This sequence belongs to the NDK family. The cofactor is Mg(2+).

Its subcellular location is the cytoplasm. The protein localises to the nucleus. It is found in the cell projection. The protein resides in the lamellipodium. It localises to the ruffle. The catalysed reaction is a 2'-deoxyribonucleoside 5'-diphosphate + ATP = a 2'-deoxyribonucleoside 5'-triphosphate + ADP. It catalyses the reaction a ribonucleoside 5'-diphosphate + ATP = a ribonucleoside 5'-triphosphate + ADP. In terms of biological role, major role in the synthesis of nucleoside triphosphates other than ATP. The chain is Nucleoside diphosphate kinase B (nme2) from Merluccius australis australis (Austral hake).